The primary structure comprises 505 residues: DEAD-box ATP-dependent RNA helicase 8 (505 aa).

The disordered stretch occupies residues 1–85 (MNNRGRYPPG…GQIPGGNSNG (85 aa)). The span at 20–31 (PNPNYQSRSGYQ) shows a compositional bias: polar residues. Low complexity predominate over residues 43 to 71 (NYAQNHQQQFQQAPSQPHQYQQQQQQQQQ). A Q motif motif is present at residues 131–159 (NEFEDYFLKRELLMGIYEKGFERPSPIQE). One can recognise a Helicase ATP-binding domain in the interval 162–332 (IPIALTGRDI…DRFLTNPYVI (171 aa)). Residue 175-182 (AKNGTGKT) coordinates ATP. Thr237 bears the Phosphothreonine mark. A DEAD box motif is present at residues 280–283 (DEAD). Positions 342–502 (GITQFYAFVE…QIPPHIDQAI (161 aa)) constitute a Helicase C-terminal domain.

This sequence belongs to the DEAD box helicase family. DDX6/DHH1 subfamily.

The protein resides in the cytoplasm. It localises to the P-body. The catalysed reaction is ATP + H2O = ADP + phosphate + H(+). Its function is as follows. ATP-dependent RNA helicase involved in mRNA turnover, and more specifically in mRNA decapping. This chain is DEAD-box ATP-dependent RNA helicase 8 (RH8), found in Arabidopsis thaliana (Mouse-ear cress).